A 357-amino-acid chain; its full sequence is Pheromone receptor 1 (357 aa).

7 consecutive transmembrane segments (helical) span residues 5–25, 32–52, 67–90, 110–130, 145–165, 206–226, and 268–288; these read ITPF…AWHI, LIML…NSMV, LSVR…ARKL, VIID…LMIV, WPMM…VIVV, LLLL…GTIA, and LILA…MFGL. The disordered stretch occupies residues 338 to 357; that stretch reads ANTSTKSEKSDIDMRGSEAA. Residues 343-357 show a composition bias toward basic and acidic residues; sequence KSEKSDIDMRGSEAA.

This sequence belongs to the G-protein coupled receptor 4 family.

The protein resides in the membrane. In terms of biological role, receptor for the A2 pheromone, a prenylated mating factor. The chain is Pheromone receptor 1 (PRA1) from Mycosarcoma maydis (Corn smut fungus).